Reading from the N-terminus, the 469-residue chain is Probable Xaa-Pro aminopeptidase PEPP (469 aa).

4 residues coordinate Mn(2+): Asp-265, Asp-276, Glu-399, and Glu-439.

It belongs to the peptidase M24B family. Requires Mn(2+) as cofactor.

It catalyses the reaction Release of any N-terminal amino acid, including proline, that is linked to proline, even from a dipeptide or tripeptide.. Its function is as follows. Catalyzes the removal of a penultimate prolyl residue from the N-termini of peptides. In Coccidioides posadasii (strain RMSCC 757 / Silveira) (Valley fever fungus), this protein is Probable Xaa-Pro aminopeptidase PEPP (PEPP).